A 768-amino-acid polypeptide reads, in one-letter code: Solabiose phosphorylase (768 aa).

Catalysis depends on Asp456, which acts as the Proton donor.

This sequence belongs to the glycosyl hydrolase 94 family.

It carries out the reaction solabiose + phosphate = D-galactose + alpha-D-glucose 1-phosphate. Catalyzes the reversible phosphorolysis of solabiose. Catalyzes the phosphorolysis and synthesis of solabiose through a sequential bi-bi mechanism involving the formation of a ternary complex. Is probably involved in the metabolism of solabiose released from solabiose-containing compounds. In Paenibacillus borealis, this protein is Solabiose phosphorylase.